The sequence spans 1108 residues: MQFDEKKEMFTIPEFGQIQLEGFCRFIEYDLLDKFVKFPKIANTQKEVEFLFDKNYKIIEPSIKEKDAVYQRLTFSSKLFVPAFFIYWNKIKKKKIIYLGEIPLMNNNGTFLINGNYRVVVNQLIRSPGIYYSLERKRTGNIYTSTLISDCGGRLKFEIDIKQNIWIRISRKKNVSILVFFFAMGLDIEEILKNTYYIKGFEGWGLICNEKLKHKLSRKKGAIFTFYEELGSRGDNNDFVFSESLSESLYKKFTNFLSKRCKLGRIGRRNLNKKLNLEIPDNEIFLLPQDVLAIIDYLIKVSYGVGTVDNIDHLQNRRFFSVADLLKKEVGLALNRVKVLIQKTMQTIEMLRKKQNKRIMLPEIPLVSTQITKTLKHFFGLHPLSQFLEQTNSLAEILHARKVSFLGPGGLTERTANFRARDIHPSYYGRFCPINTPEGQNAGLIASLAISARINFGFLESPFYNVAKKYQKAKKIVYLSPSEDVYYRIALGNCLSVDQKIPEKKNTPTQYHQEFLSIAWEQIHFRCFLPLQYFSIGVSLIPFLEHNDATRALMGSNMQRQAVPSVQPEKCIVGTGLEGQVALDSGALAISTQEGRIQYSDAATIVSVLKGNTTQTELQIYQRSNSNTLMHQKTHASQAKYVRKGQILADGAAMLGGEICLGKNILVAYMPWQGYNFEDAILISECLIYKDIFTSFHITRYETTICTAECEKMTREIPRLATYSLRHLDKNGLVRVGSWVQPGDVLVGKLRPRSSEDFSRFPELRLLQDLFCTSPIKETCLRANGKGRVIDVNWSKLQAFCKDDLEKGHQDDDTEDIYDEAEDALEKVYQLNNYNLSSDSEKVHVYLLEKRKIQVGDKVAGRHGNKGIVSIVLSRQDMPFLQSGISLDMVLNPLSVPSRMNVGQIFECLLGLAGTMNKHYRIPPFDERYEQEASRKLVFYELYKASEQTANPWIFELEHLGKTQIFDGRTGEIFEQPVTTGNAYILKLIHQVNDKMHARSTGNYARITQQPVQGKSKGGGQRLGEMEVWALESFGVAYVLREMLTVKADHIRARKKILRSILDGHSVPKADSATESFRVLSKELNSLALELNHTIISGKYFNLDRIEV.

Belongs to the RNA polymerase beta chain family. In terms of assembly, in plastids the minimal PEP RNA polymerase catalytic core is composed of four subunits: alpha, beta, beta', and beta''. When a (nuclear-encoded) sigma factor is associated with the core the holoenzyme is formed, which can initiate transcription.

Its subcellular location is the plastid. The protein localises to the chloroplast. It catalyses the reaction RNA(n) + a ribonucleoside 5'-triphosphate = RNA(n+1) + diphosphate. Its function is as follows. DNA-dependent RNA polymerase catalyzes the transcription of DNA into RNA using the four ribonucleoside triphosphates as substrates. The protein is DNA-directed RNA polymerase subunit beta of Gnetum parvifolium (Small-leaved jointfir).